The sequence spans 248 residues: 3-deoxy-manno-octulosonate cytidylyltransferase (248 aa).

It belongs to the KdsB family.

The protein resides in the cytoplasm. It carries out the reaction 3-deoxy-alpha-D-manno-oct-2-ulosonate + CTP = CMP-3-deoxy-beta-D-manno-octulosonate + diphosphate. It participates in nucleotide-sugar biosynthesis; CMP-3-deoxy-D-manno-octulosonate biosynthesis; CMP-3-deoxy-D-manno-octulosonate from 3-deoxy-D-manno-octulosonate and CTP: step 1/1. Its pathway is bacterial outer membrane biogenesis; lipopolysaccharide biosynthesis. Functionally, activates KDO (a required 8-carbon sugar) for incorporation into bacterial lipopolysaccharide in Gram-negative bacteria. The protein is 3-deoxy-manno-octulosonate cytidylyltransferase of Chlorobium chlorochromatii (strain CaD3).